The sequence spans 500 residues: Phenylalanine--tRNA ligase alpha subunit (500 aa).

L-phenylalanine contacts are provided by residues Thr-343, 382–384, and Phe-423; that span reads QID. Glu-425 contributes to the Mg(2+) binding site. Phe-448 lines the L-phenylalanine pocket.

It belongs to the class-II aminoacyl-tRNA synthetase family. Phe-tRNA synthetase alpha subunit type 2 subfamily. Tetramer of two alpha and two beta subunits. The cofactor is Mg(2+).

It localises to the cytoplasm. It carries out the reaction tRNA(Phe) + L-phenylalanine + ATP = L-phenylalanyl-tRNA(Phe) + AMP + diphosphate + H(+). This chain is Phenylalanine--tRNA ligase alpha subunit, found in Pyrococcus abyssi (strain GE5 / Orsay).